Here is an 842-residue protein sequence, read N- to C-terminus: MVAFTPEEVRNLMGKPSNVRNMSVIAHVDHGKSTLTDSLVQKAGIISAAKAGDARFMDTRADEQERGVTIKSTAISLFAEMTDDDMKDMKEPADGTDFLVNLIDSPGHVDFSSEVTAALRVTDGALVVVDTIEGVCVQTETVLRQALGERIRPVVVVNKVDRALLELQISQEELYQNFARVVESVNVVISTYYDKVLGDCQVFPDKGTVAFASGLHGWAFTVRQFANRYAKKFGIDRNKMMQRLWGENYFNPKTKKWSKSATDANGNSNQRAFNMFILDPIYRIFDAVMNSRKDEVFTLLSKLEVTIKPDEKELEGKALLKVVMRKFLPAADALMEMIVLHLPSPKTAQQYRAETLYEGPMDDECAVGIRNCDANAPLMIYVSKMVPTSDRGRFYAFGRVFSGTVRSGLKVRIQGPNYVPGKKDDLFIKAIQRTVLMMGSRIEPIEDCPAGNIIGLVGVDQFLVKSGTLTTSEVAHNMKVMKFSVSPVVQVAVEVKNGNDLPKLVEGLKRLSKSDPCVLCTTSESGEHIVAGAGELHLEICLKDLQEDHAGIPLKISPPVVSYRESVSEPSSMTALSKSPNKHNRIFMTAEPMSEELSVAIETGHVNPRDDFKVRARIMADEFGWDVTDARKIWCFGPDTTGANVVVDQTKAVAYLNEIKDSVVAAFAWASKEGPMFEENLRSCRFNILDVVLHADAIHRGGGQIIPTARRVVYASTLLASPIIQEPVFLVEIQVSENAMGGIYSVLNKKRGHVFSEEQRVGTPLYNIKAYLPVNESFGFTGELRQATAGQAFPQLVFDHWSPMSGDPLDPTSKPGQIVCEARKRKGLKENVPDYTEYYDRL.

Positions serine 17–lysine 253 constitute a tr-type G domain. GTP is bound by residues alanine 26–serine 33, aspartate 104–histidine 108, and asparagine 158–aspartate 161. Phosphoserine is present on serine 568. A Phosphothreonine modification is found at threonine 574. Histidine 699 carries the post-translational modification Diphthamide.

This sequence belongs to the TRAFAC class translation factor GTPase superfamily. Classic translation factor GTPase family. EF-G/EF-2 subfamily.

The protein localises to the cytoplasm. Functionally, catalyzes the GTP-dependent ribosomal translocation step during translation elongation. During this step, the ribosome changes from the pre-translocational (PRE) to the post-translocational (POST) state as the newly formed A-site-bound peptidyl-tRNA and P-site-bound deacylated tRNA move to the P and E sites, respectively. Catalyzes the coordinated movement of the two tRNA molecules, the mRNA and conformational changes in the ribosome. The protein is Elongation factor 2 (eft201) of Schizosaccharomyces pombe (strain 972 / ATCC 24843) (Fission yeast).